The sequence spans 234 residues: UPF0441 protein plu3956 (234 aa).

Disordered stretches follow at residues 105-129 (QAGL…QQSG) and 149-234 (SAPS…SVGG). Positions 110–127 (TTTSSTSTNGEAQAQQQQ) are enriched in low complexity. The span at 150–175 (APSQPLFSSKSATSPANGQFVDSTGK) shows a compositional bias: polar residues. Composition is skewed to low complexity over residues 188-205 (TVPK…TTIT) and 216-234 (QSTM…SVGG).

Belongs to the UPF0441 family.

This Photorhabdus laumondii subsp. laumondii (strain DSM 15139 / CIP 105565 / TT01) (Photorhabdus luminescens subsp. laumondii) protein is UPF0441 protein plu3956.